A 622-amino-acid polypeptide reads, in one-letter code: Microtubule-associated protein 70-1 (622 aa).

A disordered region spans residues 1–27; the sequence is MSDVSADGGFLSAEQATTPVAIPTPYP. Positions 66–365 form a coiled coil; the sequence is DPVKVELNRL…LAISDRAAKS (300 aa). The segment at 250 to 483 is required for targeting to microtubules; sequence ILDRMHRQKV…YSFNKACDET (234 aa). Disordered stretches follow at residues 388–512 and 579–622; these read SSIS…TEDN and AAMR…RSTQ. 2 stretches are compositionally biased toward polar residues: residues 400–425 and 432–453; these read SMSN…SNGF and MRNS…TSKS. 2 stretches are compositionally biased toward basic and acidic residues: residues 479–501 and 579–591; these read ACDE…EKPP and AAMR…DNRA. The stretch at 541–590 forms a coiled coil; the sequence is DKDDAIEMLAKKVETLTKAMEVEAKKMRREVAAMEKEVAAMRVDKDQDNR. The span at 594 to 605 shows a compositional bias: polar residues; it reads SSNTKPSSNTAQ.

This sequence belongs to the MAP70 family. In terms of assembly, interacts with MAP70.5 and itself.

The protein localises to the cytoplasm. The protein resides in the cytoskeleton. It is found in the phragmoplast. It localises to the spindle. In terms of biological role, plant-specific protein that interact with microtubules. In association with MAP70.5, is essential for the normal banding pattern of secondary cell wall and for the proper development of xylem tracheary elements and wood formation. This is Microtubule-associated protein 70-1 (MAP70.1) from Arabidopsis thaliana (Mouse-ear cress).